A 368-amino-acid chain; its full sequence is Molybdenum import ATP-binding protein ModC (368 aa).

An ABC transporter domain is found at 1–231 (MKGLQVAFKQ…QAMRPWQSFS (231 aa)). 33 to 40 (GRSGAGKT) provides a ligand contact to ATP. Residues 292–363 (KTSIRNIIEA…IKGVSVTQRD (72 aa)) form the Mop domain.

Belongs to the ABC transporter superfamily. Molybdate importer (TC 3.A.1.8) family. The complex is composed of two ATP-binding proteins (ModC), two transmembrane proteins (ModB) and a solute-binding protein (ModA).

The protein localises to the cell inner membrane. The enzyme catalyses molybdate(out) + ATP + H2O = molybdate(in) + ADP + phosphate + H(+). Functionally, part of the ABC transporter complex ModABC involved in molybdenum import. Responsible for energy coupling to the transport system. The sequence is that of Molybdenum import ATP-binding protein ModC from Vibrio vulnificus (strain YJ016).